The sequence spans 434 residues: MSFNTLINWNSCSPEQQRALLTRPAISASDSITRTVSDILDNVKTRGDDALREYSAKFDKTEVTALRVTPEEIAAAGARLSDELKQAMAAAVKNIETFHSAQTLPPVDVETQPGVRCQQVTRPVASVGLYIPGGSAPLFSTVLMLATPARIAGCQNVVLCSPPPIADEILYAAQLCGVQEIFNVGGAQAIAALAFGSESVPKVDKIFGPGNAFVTEAKRQVSQRLDGAAIDMPAGPSEVLVIADSGATPDFVASDLLSQAEHGPDSQVILLTPDADIARKVAEAVERQLAELPRADTARQALSASRLIVTKDLAQCVAISNQYGPEHLIIQTRNARDLVDAITSAGSVFLGDWSPESAGDYASGTNHVLPTYGYTATCSSLGLADFQKRMTVQELSKAGFSALASTIETLAAAERLTAHKNAVTLRVNALKEQA.

Residues Tyr-130, Gln-188, and Asn-211 each coordinate NAD(+). The substrate site is built by Ser-237, Gln-259, and His-262. Positions 259 and 262 each coordinate Zn(2+). Catalysis depends on proton acceptor residues Glu-326 and His-327. Substrate-binding residues include His-327, Asp-360, Glu-414, and His-419. Residue Asp-360 coordinates Zn(2+). His-419 is a binding site for Zn(2+).

It belongs to the histidinol dehydrogenase family. Homodimer. It depends on Zn(2+) as a cofactor.

It catalyses the reaction L-histidinol + 2 NAD(+) + H2O = L-histidine + 2 NADH + 3 H(+). Its pathway is amino-acid biosynthesis; L-histidine biosynthesis; L-histidine from 5-phospho-alpha-D-ribose 1-diphosphate: step 9/9. Functionally, catalyzes the sequential NAD-dependent oxidations of L-histidinol to L-histidinaldehyde and then to L-histidine. The chain is Histidinol dehydrogenase from Salmonella choleraesuis (strain SC-B67).